Reading from the N-terminus, the 272-residue chain is Shikimate dehydrogenase (NADP(+)) (272 aa).

Shikimate is bound by residues 14 to 16 and Thr-61; that span reads SKS. The Proton acceptor role is filled by Lys-65. NADP(+) is bound at residue Glu-77. Residues Asn-86 and Asp-102 each coordinate shikimate. NADP(+) contacts are provided by residues 126-130, 149-154, and Met-213; these read GAGGA and NRTQEK. Position 215 (Tyr-215) interacts with shikimate. Residue Gly-237 participates in NADP(+) binding.

Belongs to the shikimate dehydrogenase family. Homodimer.

It carries out the reaction shikimate + NADP(+) = 3-dehydroshikimate + NADPH + H(+). The protein operates within metabolic intermediate biosynthesis; chorismate biosynthesis; chorismate from D-erythrose 4-phosphate and phosphoenolpyruvate: step 4/7. In terms of biological role, involved in the biosynthesis of the chorismate, which leads to the biosynthesis of aromatic amino acids. Catalyzes the reversible NADPH linked reduction of 3-dehydroshikimate (DHSA) to yield shikimate (SA). This chain is Shikimate dehydrogenase (NADP(+)), found in Erwinia tasmaniensis (strain DSM 17950 / CFBP 7177 / CIP 109463 / NCPPB 4357 / Et1/99).